A 227-amino-acid polypeptide reads, in one-letter code: NADH-quinone oxidoreductase subunit C (227 aa).

The protein belongs to the complex I 30 kDa subunit family. NDH-1 is composed of 14 different subunits. Subunits NuoB, C, D, E, F, and G constitute the peripheral sector of the complex.

It localises to the cell inner membrane. It catalyses the reaction a quinone + NADH + 5 H(+)(in) = a quinol + NAD(+) + 4 H(+)(out). Its function is as follows. NDH-1 shuttles electrons from NADH, via FMN and iron-sulfur (Fe-S) centers, to quinones in the respiratory chain. The immediate electron acceptor for the enzyme in this species is believed to be ubiquinone. Couples the redox reaction to proton translocation (for every two electrons transferred, four hydrogen ions are translocated across the cytoplasmic membrane), and thus conserves the redox energy in a proton gradient. The sequence is that of NADH-quinone oxidoreductase subunit C from Legionella pneumophila (strain Lens).